Consider the following 884-residue polypeptide: Chondroitin sulfate synthase 3 (884 aa).

Residues 1–7 (MAVRSRR) are Cytoplasmic-facing. A helical; Signal-anchor for type II membrane protein transmembrane segment spans residues 8–28 (PWVSVALGLVLGFTAASWLIA). Residues 29-884 (PRVAELSEKR…LGVRDNRTLS (856 aa)) lie on the Lumenal side of the membrane. Residues 47 to 164 (YYGRSATGPR…NGSGDGGAAV (118 aa)) are disordered. Composition is skewed to low complexity over residues 60 to 69 (QQLLPQPQSR) and 84 to 96 (PGPQ…PGGP). Asparagine 155 and asparagine 281 each carry an N-linked (GlcNAc...) asparagine glycan. Residues 437–456 (SNSEVSKEDQQLGRTPSFNH) are disordered. Residue asparagine 712 is glycosylated (N-linked (GlcNAc...) asparagine). A divalent metal cation is bound by residues aspartate 722 and histidine 836. Residue asparagine 880 is glycosylated (N-linked (GlcNAc...) asparagine).

It belongs to the chondroitin N-acetylgalactosaminyltransferase family. It depends on Co(2+) as a cofactor. Mn(2+) serves as cofactor. The cofactor is Cd(2+).

The protein resides in the golgi apparatus. The protein localises to the golgi stack membrane. It catalyses the reaction 3-O-(beta-D-GlcA-(1-&gt;3)-beta-D-GalNAc-(1-&gt;4)-beta-D-GlcA-(1-&gt;3)-beta-D-Gal-(1-&gt;3)-beta-D-Gal-(1-&gt;4)-beta-D-Xyl)-L-seryl-[protein] + UDP-N-acetyl-alpha-D-galactosamine = 3-O-(beta-D-GalNAc-(1-&gt;4)-beta-D-GlcA-(1-&gt;3)-beta-D-GalNAc-(1-&gt;4)-beta-D-GlcA-(1-&gt;3)-beta-D-Gal-(1-&gt;3)-beta-D-Gal-(1-&gt;4)-beta-D-Xyl)-L-seryl-[protein] + UDP + H(+). It carries out the reaction 3-O-{beta-D-GlcA-(1-&gt;3)-[beta-D-GalNAc-(1-&gt;4)-beta-D-GlcA-(1-&gt;3)](n)-beta-D-GalNAc-(1-&gt;4)-beta-D-GlcA-(1-&gt;3)-beta-D-Gal-(1-&gt;3)-beta-D-Gal-(1-&gt;4)-beta-D-Xyl}-L-seryl-[protein] + UDP-N-acetyl-alpha-D-galactosamine = 3-O-{[beta-D-GalNAc-(1-&gt;4)-beta-D-GlcA-(1-&gt;3)](n+1)-beta-D-GalNAc-(1-&gt;4)-beta-D-GlcA-(1-&gt;3)-beta-D-Gal-(1-&gt;3)-beta-D-Gal-(1-&gt;4)-beta-D-Xyl}-L-seryl-[protein] + UDP + H(+). The catalysed reaction is 3-O-(beta-D-GalNAc-(1-&gt;4)-beta-D-GlcA-(1-&gt;3)-beta-D-Gal-(1-&gt;3)-beta-D-Gal-(1-&gt;4)-beta-D-Xyl)-L-seryl-[protein] + UDP-alpha-D-glucuronate = 3-O-(beta-D-GlcA-(1-&gt;3)-beta-D-GalNAc-(1-&gt;4)-beta-D-GlcA-(1-&gt;3)-beta-D-Gal-(1-&gt;3)-beta-D-Gal-(1-&gt;4)-beta-D-Xyl)-L-seryl-[protein] + UDP + H(+). The enzyme catalyses 3-O-{[beta-D-GalNAc-(1-&gt;4)-beta-D-GlcA-(1-&gt;3)](n)-beta-D-GalNAc-(1-&gt;4)-beta-D-GlcA-(1-&gt;3)-beta-D-Gal-(1-&gt;3)-beta-D-Gal-(1-&gt;4)-beta-D-Xyl}-L-seryl-[protein] + UDP-alpha-D-glucuronate = 3-O-{beta-D-GlcA-(1-&gt;3)-[beta-D-GalNAc-(1-&gt;4)-beta-D-GlcA-(1-&gt;3)](n)-beta-D-GalNAc-(1-&gt;4)-beta-D-GlcA-(1-&gt;3)-beta-D-Gal-(1-&gt;3)-beta-D-Gal-(1-&gt;4)-beta-D-Xyl}-L-seryl-[protein] + UDP + H(+). Has both beta-1,3-glucuronic acid and beta-1,4-N-acetylgalactosamine transferase activity. Transfers glucuronic acid (GlcUA) from UDP-GlcUA and N-acetylgalactosamine (GalNAc) from UDP-GalNAc to the non-reducing end of the elongating chondroitin polymer. Specific activity is much reduced compared to CHSY1. The sequence is that of Chondroitin sulfate synthase 3 (Chsy3) from Mus musculus (Mouse).